The chain runs to 454 residues: Bifunctional protein GlmU (454 aa).

Residues Met1–Lys225 are pyrophosphorylase. UDP-N-acetyl-alpha-D-glucosamine-binding positions include Leu6–Gly9, Lys20, Gln71, Gly76–Thr77, Tyr98–Asp100, Gly135, Glu150, Asn165, and Asn223. Position 100 (Asp100) interacts with Mg(2+). Position 223 (Asn223) interacts with Mg(2+). The interval Val226–Ala246 is linker. An N-acetyltransferase region spans residues Gly247–Lys454. UDP-N-acetyl-alpha-D-glucosamine is bound by residues Arg329 and Lys347. The active-site Proton acceptor is His359. UDP-N-acetyl-alpha-D-glucosamine contacts are provided by Tyr362 and Asn373. Acetyl-CoA is bound by residues Ala376, Asn382 to Tyr383, Ser401, Ala419, and Arg436.

In the N-terminal section; belongs to the N-acetylglucosamine-1-phosphate uridyltransferase family. It in the C-terminal section; belongs to the transferase hexapeptide repeat family. Homotrimer. It depends on Mg(2+) as a cofactor.

The protein resides in the cytoplasm. It carries out the reaction alpha-D-glucosamine 1-phosphate + acetyl-CoA = N-acetyl-alpha-D-glucosamine 1-phosphate + CoA + H(+). The catalysed reaction is N-acetyl-alpha-D-glucosamine 1-phosphate + UTP + H(+) = UDP-N-acetyl-alpha-D-glucosamine + diphosphate. Its pathway is nucleotide-sugar biosynthesis; UDP-N-acetyl-alpha-D-glucosamine biosynthesis; N-acetyl-alpha-D-glucosamine 1-phosphate from alpha-D-glucosamine 6-phosphate (route II): step 2/2. It functions in the pathway nucleotide-sugar biosynthesis; UDP-N-acetyl-alpha-D-glucosamine biosynthesis; UDP-N-acetyl-alpha-D-glucosamine from N-acetyl-alpha-D-glucosamine 1-phosphate: step 1/1. It participates in bacterial outer membrane biogenesis; LPS lipid A biosynthesis. In terms of biological role, catalyzes the last two sequential reactions in the de novo biosynthetic pathway for UDP-N-acetylglucosamine (UDP-GlcNAc). The C-terminal domain catalyzes the transfer of acetyl group from acetyl coenzyme A to glucosamine-1-phosphate (GlcN-1-P) to produce N-acetylglucosamine-1-phosphate (GlcNAc-1-P), which is converted into UDP-GlcNAc by the transfer of uridine 5-monophosphate (from uridine 5-triphosphate), a reaction catalyzed by the N-terminal domain. The protein is Bifunctional protein GlmU of Cupriavidus metallidurans (strain ATCC 43123 / DSM 2839 / NBRC 102507 / CH34) (Ralstonia metallidurans).